We begin with the raw amino-acid sequence, 61 residues long: Small ribosomal subunit protein uS14 (61 aa).

Cys24, Cys27, Cys40, and Cys43 together coordinate Zn(2+).

The protein belongs to the universal ribosomal protein uS14 family. Zinc-binding uS14 subfamily. Part of the 30S ribosomal subunit. Contacts proteins S3 and S10. Requires Zn(2+) as cofactor.

Binds 16S rRNA, required for the assembly of 30S particles and may also be responsible for determining the conformation of the 16S rRNA at the A site. In Helicobacter pylori (strain J99 / ATCC 700824) (Campylobacter pylori J99), this protein is Small ribosomal subunit protein uS14.